The primary structure comprises 433 residues: Adenylosuccinate synthetase (433 aa).

GTP contacts are provided by residues 11–17 and 39–41; these read GDEGKGK and GHT. Residue aspartate 12 is the Proton acceptor of the active site. Mg(2+) is bound by residues aspartate 12 and glycine 39. Residues 12–15, 37–40, threonine 134, arginine 148, asparagine 230, threonine 245, and arginine 309 contribute to the IMP site; these read DEGK and NAGH. Histidine 40 acts as the Proton donor in catalysis. 305 to 311 contacts substrate; the sequence is VTTGRKR. GTP is bound by residues arginine 311, 337 to 339, and 419 to 421; these read KLD and GTG.

This sequence belongs to the adenylosuccinate synthetase family. Homodimer. Mg(2+) is required as a cofactor.

Its subcellular location is the cytoplasm. The catalysed reaction is IMP + L-aspartate + GTP = N(6)-(1,2-dicarboxyethyl)-AMP + GDP + phosphate + 2 H(+). It participates in purine metabolism; AMP biosynthesis via de novo pathway; AMP from IMP: step 1/2. In terms of biological role, plays an important role in the de novo pathway and in the salvage pathway of purine nucleotide biosynthesis. Catalyzes the first committed step in the biosynthesis of AMP from IMP. This chain is Adenylosuccinate synthetase, found in Eremothecium gossypii (strain ATCC 10895 / CBS 109.51 / FGSC 9923 / NRRL Y-1056) (Yeast).